Reading from the N-terminus, the 581-residue chain is Kelch-like protein 38 (581 aa).

The BTB domain maps to 34–101 (TDVSICSGAW…VYTGEVHISA (68 aa)). In terms of domain architecture, BACK spans 136–237 (CLGLVRLAEI…HPAFFHHFIA (102 aa)). Kelch repeat units follow at residues 285–332 (FLLL…TLHR), 334–383 (VYVL…THRN), 384–431 (FIFS…VKDQ), 433–479 (LYLF…VLGE), 480–521 (QIVI…VMGN), and 523–573 (LYVT…TLQC).

The protein is Kelch-like protein 38 (Klhl38) of Mus musculus (Mouse).